Consider the following 437-residue polypeptide: Eukaryotic peptide chain release factor subunit 1 (437 aa).

A2 bears the N-acetylalanine mark. The NIKS motif; plays an important role in translational termination motif lies at N61 to S64. K63 is modified (4-hydroxylysine). Residue K87 forms a Glycyl lysine isopeptide (Lys-Gly) (interchain with G-Cter in SUMO2) linkage. Q185 is subject to N5-methylglutamine. K279 participates in a covalent cross-link: Glycyl lysine isopeptide (Lys-Gly) (interchain with G-Cter in ubiquitin). T347 bears the Phosphothreonine mark. K404 is covalently cross-linked (Glycyl lysine isopeptide (Lys-Gly) (interchain with G-Cter in SUMO2)).

This sequence belongs to the eukaryotic release factor 1 family. Component of the eRF1-eRF3-GTP ternary complex, composed of ETF1/ERF1 and eRF3 (GSPT1/ERF3A or GSPT2/ERF3B) and GTP. Component of the transient SURF (SMG1-UPF1-eRF1-eRF3) complex. Interacts with JMJD4. The ETF1-GSPT1 complex interacts with JMJD4. Post-translationally, hydroxylation at Lys-63 by JMJD4 promotes its translational termination efficiency. Methylated at Gln-185 by N6AMT1. In terms of processing, ubiquitinated at Lys-279 via 'Lys-6'-linked polyubiquitin chains by RNF14 and RNF25 in response to ribosome collisions (ribosome stalling), leading to its degradation by the proteasome and rescue of stalled ribosomes.

Its subcellular location is the cytoplasm. Component of the eRF1-eRF3-GTP ternary complex, a ternary complex that mediates translation termination in response to the termination codons. The eRF1-eRF3-GTP complex binds to a stop codon in the ribosomal A-site. ETF1/ERF1 is responsible for stop codon recognition and inducing hydrolysis of peptidyl-tRNA. Following GTP hydrolysis, eRF3 (GSPT1/ERF3A or GSPT2/ERF3B) dissociates, permitting ETF1/eRF1 to accommodate fully in the A-site, followed by hydrolysis of peptidyl-tRNA. Component of the transient SURF complex which recruits UPF1 to stalled ribosomes in the context of nonsense-mediated decay (NMD) of mRNAs containing premature stop codons. Required for SHFL-mediated translation termination which inhibits programmed ribosomal frameshifting (-1PRF) of mRNA from viruses and cellular genes. This Bos taurus (Bovine) protein is Eukaryotic peptide chain release factor subunit 1 (ETF1).